Consider the following 108-residue polypeptide: Tetrahydromethanopterin S-methyltransferase subunit B (108 aa).

The chain crosses the membrane as a helical span at residues 80–100 (AFYGIVVGLAFSGLLALIIFI).

It belongs to the MtrB family. In terms of assembly, the complex is composed of 8 subunits; MtrA, MtrB, MtrC, MtrD, MtrE, MtrF, MtrG and MtrH.

Its subcellular location is the cell membrane. The enzyme catalyses 5-methyl-5,6,7,8-tetrahydromethanopterin + coenzyme M + 2 Na(+)(in) = 5,6,7,8-tetrahydromethanopterin + methyl-coenzyme M + 2 Na(+)(out). The protein operates within one-carbon metabolism; methanogenesis from CO(2); methyl-coenzyme M from 5,10-methylene-5,6,7,8-tetrahydromethanopterin: step 2/2. Functionally, part of a complex that catalyzes the formation of methyl-coenzyme M and tetrahydromethanopterin from coenzyme M and methyl-tetrahydromethanopterin. This is an energy-conserving, sodium-ion translocating step. The chain is Tetrahydromethanopterin S-methyltransferase subunit B from Methanosarcina acetivorans (strain ATCC 35395 / DSM 2834 / JCM 12185 / C2A).